Reading from the N-terminus, the 281-residue chain is 2-dehydro-3-deoxyphosphooctonate aldolase (281 aa).

This sequence belongs to the KdsA family.

It localises to the cytoplasm. The enzyme catalyses D-arabinose 5-phosphate + phosphoenolpyruvate + H2O = 3-deoxy-alpha-D-manno-2-octulosonate-8-phosphate + phosphate. It participates in carbohydrate biosynthesis; 3-deoxy-D-manno-octulosonate biosynthesis; 3-deoxy-D-manno-octulosonate from D-ribulose 5-phosphate: step 2/3. The protein operates within bacterial outer membrane biogenesis; lipopolysaccharide biosynthesis. The polypeptide is 2-dehydro-3-deoxyphosphooctonate aldolase (Hahella chejuensis (strain KCTC 2396)).